Consider the following 351-residue polypeptide: N-terminal EF-hand calcium-binding protein 1 (351 aa).

S4 is subject to Phosphoserine. EF-hand domains are found at residues 26–61 (KGMS…GVLS) and 60–95 (LSGE…HLGE). 5 residues coordinate Ca(2+): D39, N41, D43, K45, and E50. Residues 135-163 (LLKETLNQLQSLQNSLECAMETTEEQTRQ) are a coiled coil. The segment at 180 to 203 (GKRSSRRVQRHNSFSPNSPQFNVS) is disordered. Over residues 190–202 (HNSFSPNSPQFNV) the composition is skewed to polar residues. Residues S192 and S197 each carry the phosphoserine modification. Residues 209–275 (EEDNQWMTQI…EEFQLALKHY (67 aa)) adopt a coiled-coil conformation. Positions 252 to 340 (MLVQRQMSVI…LETPELTSTM (89 aa)) constitute an ABM domain.

As to quaternary structure, interacts with STX1. May interact with CPNE6. Expressed in brain (at protein level).

Its subcellular location is the cytoplasm. The protein is N-terminal EF-hand calcium-binding protein 1 (NECAB1) of Homo sapiens (Human).